We begin with the raw amino-acid sequence, 458 residues long: RuvB-like helicase 1 (458 aa).

Residue 71–78 coordinates ATP; that stretch reads GGPGTGKT.

Belongs to the RuvB family. As to quaternary structure, may form heterododecamers with RVB2. Component of the SWR1 chromatin remodeling complex, the INO80 chromatin remodeling complex, and of the R2TP complex.

Its subcellular location is the nucleus. It catalyses the reaction ATP + H2O = ADP + phosphate + H(+). Functionally, DNA helicase which participates in several chromatin remodeling complexes, including the SWR1 and the INO80 complexes. The SWR1 complex mediates the ATP-dependent exchange of histone H2A for the H2A variant HZT1 leading to transcriptional regulation of selected genes by chromatin remodeling. The INO80 complex remodels chromatin by shifting nucleosomes and is involved in DNA repair. Also involved in pre-rRNA processing. This is RuvB-like helicase 1 (RVB1) from Gibberella zeae (strain ATCC MYA-4620 / CBS 123657 / FGSC 9075 / NRRL 31084 / PH-1) (Wheat head blight fungus).